Consider the following 95-residue polypeptide: Probable dolichol-phosphate mannosyltransferase subunit 3 (95 aa).

2 consecutive transmembrane segments (helical) span residues 10 to 30 (AHVI…VPVL) and 44 to 64 (APFF…VYGV).

Belongs to the DPM3 family.

It localises to the endoplasmic reticulum membrane. The protein operates within protein modification; protein glycosylation. In terms of biological role, stabilizer subunit of the dolichol-phosphate-mannose synthase complex. The sequence is that of Probable dolichol-phosphate mannosyltransferase subunit 3 (dpm-3) from Caenorhabditis elegans.